Consider the following 428-residue polypeptide: Trigger factor (428 aa).

A PPIase FKBP-type domain is found at 163–248; the sequence is GDTVVIDFEG…VHEVKAKQLP (86 aa).

This sequence belongs to the FKBP-type PPIase family. Tig subfamily.

The protein localises to the cytoplasm. The catalysed reaction is [protein]-peptidylproline (omega=180) = [protein]-peptidylproline (omega=0). Involved in protein export. Acts as a chaperone by maintaining the newly synthesized protein in an open conformation. Functions as a peptidyl-prolyl cis-trans isomerase. The protein is Trigger factor of Geobacillus kaustophilus (strain HTA426).